A 375-amino-acid polypeptide reads, in one-letter code: Chaperone protein DnaJ (375 aa).

The J domain occupies 6–71 (DYYEVLGVPK…EKRRQYDQFG (66 aa)). The segment at 138 to 220 (GTTKKIDVTL…CYGTGYISSK (83 aa)) adopts a CR-type zinc-finger fold. Residues Cys151, Cys154, Cys168, Cys171, Cys194, Cys197, Cys208, and Cys211 each contribute to the Zn(2+) site. CXXCXGXG motif repeat units lie at residues 151–158 (CSSCHGTG), 168–175 (CSKCGGRG), 194–201 (CPDCHGTG), and 208–215 (CPDCYGTG).

This sequence belongs to the DnaJ family. In terms of assembly, homodimer. The cofactor is Zn(2+).

The protein localises to the cytoplasm. Participates actively in the response to hyperosmotic and heat shock by preventing the aggregation of stress-denatured proteins and by disaggregating proteins, also in an autonomous, DnaK-independent fashion. Unfolded proteins bind initially to DnaJ; upon interaction with the DnaJ-bound protein, DnaK hydrolyzes its bound ATP, resulting in the formation of a stable complex. GrpE releases ADP from DnaK; ATP binding to DnaK triggers the release of the substrate protein, thus completing the reaction cycle. Several rounds of ATP-dependent interactions between DnaJ, DnaK and GrpE are required for fully efficient folding. Also involved, together with DnaK and GrpE, in the DNA replication of plasmids through activation of initiation proteins. This Lachnospira eligens (strain ATCC 27750 / DSM 3376 / VPI C15-48 / C15-B4) (Eubacterium eligens) protein is Chaperone protein DnaJ.